Consider the following 473-residue polypeptide: Chromosomal replication initiator protein DnaA (473 aa).

Positions 1-90 are domain I, interacts with DnaA modulators; sequence MSSSLWLQCL…KRVTAPKSET (90 aa). Residues 91–136 are domain II; the sequence is IAPARTRTAADVAAESSAPAQLQARKPVHNIWRDEEPVAVDLNHRS. The domain III, AAA+ region stretch occupies residues 137-353; that stretch reads NVNPKHKFNN…GALNRVIANA (217 aa). ATP is bound by residues Gly-181, Gly-183, Lys-184, and Thr-185. Positions 354–473 are domain IV, binds dsDNA; sequence NFTGRPITID…YSNLIRTLSS (120 aa).

It belongs to the DnaA family. As to quaternary structure, oligomerizes as a right-handed, spiral filament on DNA at oriC.

The protein resides in the cytoplasm. Functionally, plays an essential role in the initiation and regulation of chromosomal replication. ATP-DnaA binds to the origin of replication (oriC) to initiate formation of the DNA replication initiation complex once per cell cycle. Binds the DnaA box (a 9 base pair repeat at the origin) and separates the double-stranded (ds)DNA. Forms a right-handed helical filament on oriC DNA; dsDNA binds to the exterior of the filament while single-stranded (ss)DNA is stabiized in the filament's interior. The ATP-DnaA-oriC complex binds and stabilizes one strand of the AT-rich DNA unwinding element (DUE), permitting loading of DNA polymerase. After initiation quickly degrades to an ADP-DnaA complex that is not apt for DNA replication. Binds acidic phospholipids. The polypeptide is Chromosomal replication initiator protein DnaA (Vibrio atlanticus (strain LGP32) (Vibrio splendidus (strain Mel32))).